Here is a 451-residue protein sequence, read N- to C-terminus: Photosystem II CP43 reaction center protein (451 aa).

Residues 1–46 (ATNRDQESSGFAWWAGNARLINLSGKLLGAHVAHAGLIVFWAGAMT) lie on the Cytoplasmic side of the membrane. Residues tryptophan 13, leucine 27, and alanine 30 each contribute to the chlorophyll a site. A helical membrane pass occupies residues 47–71 (LFELAHFIPEKPMYEQGLILIPHIA). At 72 to 111 (TLGWGVGPGGEVVDTFPFFVVGVVHLISSAVLGFGGVYHA) the chain is on the lumenal side. Chlorophyll a-binding residues include valine 92 and glycine 106. Residues 112–133 (IRGPETLEEYSSFFGYDWKDKN) traverse the membrane as a helical segment. Over 134–155 (KMTTILGFHLIVLGIGALLLVA) the chain is Cytoplasmic. Residue isoleucine 138 coordinates chlorophyll a. A helical transmembrane segment spans residues 156–178 (KAMFFGGLYDTWAPGGGDVRVIT). At 179 to 232 (NPTLDPRVIFGYLLKSPFGGEGWIVSVNNLEDVVGGHIWIGLICIAGGIWHILT) the chain is on the lumenal side. The chlorophyll a site is built by valine 211 and glycine 225. A helical membrane pass occupies residues 233–253 (TPFGWARRAFIWSGEAYLSYS). Residues 254-268 (LGALSMMGFIATCFV) are Cytoplasmic-facing. A helical transmembrane segment spans residues 269 to 290 (WFNNTVYPSEFYGPTGPEASQA). Topologically, residues 291–424 (QAMTFLIRDQ…FLVGHLWHAG (134 aa)) are lumenal. Residue glutamate 345 coordinates [CaMn4O5] cluster. 3 residues coordinate chlorophyll a: leucine 404, phenylalanine 415, and glycine 418. The chain crosses the membrane as a helical span at residues 425–449 (RARAAAAGFEKGIDRESEPVLSMPS). Over 450–451 (LD) the chain is Cytoplasmic.

It belongs to the PsbB/PsbC family. PsbC subfamily. PSII is composed of 1 copy each of membrane proteins PsbA, PsbB, PsbC, PsbD, PsbE, PsbF, PsbH, PsbI, PsbJ, PsbK, PsbL, PsbM, PsbT, PsbX, PsbY, PsbZ, Psb30/Ycf12, peripheral proteins PsbO, CyanoQ (PsbQ), PsbU, PsbV and a large number of cofactors. It forms dimeric complexes. Requires Binds multiple chlorophylls and provides some of the ligands for the Ca-4Mn-5O cluster of the oxygen-evolving complex. It may also provide a ligand for a Cl- that is required for oxygen evolution. PSII binds additional chlorophylls, carotenoids and specific lipids. as cofactor.

Its subcellular location is the cellular thylakoid membrane. Functionally, one of the components of the core complex of photosystem II (PSII). It binds chlorophyll and helps catalyze the primary light-induced photochemical processes of PSII. PSII is a light-driven water:plastoquinone oxidoreductase, using light energy to abstract electrons from H(2)O, generating O(2) and a proton gradient subsequently used for ATP formation. The protein is Photosystem II CP43 reaction center protein of Thermostichus vulcanus (Synechococcus vulcanus).